Consider the following 107-residue polypeptide: Large ribosomal subunit protein eL33 (107 aa).

Belongs to the eukaryotic ribosomal protein eL33 family. Component of the large ribosomal subunit. Mature ribosomes consist of a small (40S) and a large (60S) subunit. The 40S subunit contains about 32 different proteins and 1 molecule of RNA (18S). The 60S subunit contains 45 different proteins and 3 molecules of RNA (25S, 5.8S and 5S).

It localises to the cytoplasm. Component of the ribosome, a large ribonucleoprotein complex responsible for the synthesis of proteins in the cell. The small ribosomal subunit (SSU) binds messenger RNAs (mRNAs) and translates the encoded message by selecting cognate aminoacyl-transfer RNA (tRNA) molecules. The large subunit (LSU) contains the ribosomal catalytic site termed the peptidyl transferase center (PTC), which catalyzes the formation of peptide bonds, thereby polymerizing the amino acids delivered by tRNAs into a polypeptide chain. The nascent polypeptides leave the ribosome through a tunnel in the LSU and interact with protein factors that function in enzymatic processing, targeting, and the membrane insertion of nascent chains at the exit of the ribosomal tunnel. This Candida albicans (strain SC5314 / ATCC MYA-2876) (Yeast) protein is Large ribosomal subunit protein eL33.